The following is a 114-amino-acid chain: MPNYKVVLEAAWIVKDAKSVDDAMSVAISEAGKRLNAAKMDFVEVEVGGTFCPFCGEPFDSVFVVAGTGIVGLLLEMKVFNAESKEHAERIARKGIGKALRDVPLKVVDITEAE.

The protein belongs to the UPF0212 family.

The protein is UPF0212 protein UNCMA_00570 of Methanocella arvoryzae (strain DSM 22066 / NBRC 105507 / MRE50).